The chain runs to 131 residues: MSWQAYVDEHLMCEIEGQHLSAAAIVGHDGSVWAQSESFPELKPEEVAGIIKDFDEPGTLAPTGLFVGGTKYMVIQGEPGVVIRGKKGTGGITIKKTGMSLIIGVYDEPMTPGQCNMVVERLGDYLIEQGF.

Cys13 and Cys115 are disulfide-bonded. An Involved in PIP2 interaction motif is present at residues Val81–Thr97. Thr111 carries the phosphothreonine modification.

The protein belongs to the profilin family. In terms of assembly, occurs in many kinds of cells as a complex with monomeric actin in a 1:1 ratio. Phosphorylated by MAP kinases. In terms of tissue distribution, expressed predominantly in endosperm but is also found at low levels in all tissues examined, including mature and germinated pollen.

It localises to the cytoplasm. The protein localises to the cytoskeleton. Functionally, binds to actin and affects the structure of the cytoskeleton. At high concentrations, profilin prevents the polymerization of actin, whereas it enhances it at low concentrations. By binding to PIP2, it inhibits the formation of IP3 and DG. Has a high affinity for poly-proline. This Zea mays (Maize) protein is Profilin-4 (PRO4).